The chain runs to 220 residues: Protein-L-isoaspartate O-methyltransferase (220 aa).

The active site involves S64.

It belongs to the methyltransferase superfamily. L-isoaspartyl/D-aspartyl protein methyltransferase family.

It is found in the cytoplasm. It catalyses the reaction [protein]-L-isoaspartate + S-adenosyl-L-methionine = [protein]-L-isoaspartate alpha-methyl ester + S-adenosyl-L-homocysteine. Functionally, catalyzes the methyl esterification of L-isoaspartyl residues in peptides and proteins that result from spontaneous decomposition of normal L-aspartyl and L-asparaginyl residues. It plays a role in the repair and/or degradation of damaged proteins. The chain is Protein-L-isoaspartate O-methyltransferase from Thermococcus onnurineus (strain NA1).